The chain runs to 174 residues: Phosphopantetheine adenylyltransferase (174 aa).

T10 contributes to the substrate binding site. Residues 10–11 and H18 each bind ATP; that span reads TF. Residues K44, L76, and R90 each coordinate substrate. ATP is bound by residues 91–93, E101, and 126–132; these read GLR and HAYISSS.

The protein belongs to the bacterial CoaD family. In terms of assembly, homohexamer. Requires Mg(2+) as cofactor.

The protein localises to the cytoplasm. It carries out the reaction (R)-4'-phosphopantetheine + ATP + H(+) = 3'-dephospho-CoA + diphosphate. It functions in the pathway cofactor biosynthesis; coenzyme A biosynthesis; CoA from (R)-pantothenate: step 4/5. Its function is as follows. Reversibly transfers an adenylyl group from ATP to 4'-phosphopantetheine, yielding dephospho-CoA (dPCoA) and pyrophosphate. This Alkalilimnicola ehrlichii (strain ATCC BAA-1101 / DSM 17681 / MLHE-1) protein is Phosphopantetheine adenylyltransferase.